A 286-amino-acid polypeptide reads, in one-letter code: MNIAIVTINQENAAIASWLAAQDFSGCTLAHWQIEPQPVVAEQVLDALVEQWQRTPADVVLFPPGTFGDELSTRLAWRLHGASICQVTSLDIPTVSVRKSHWGNALTATLQTEKRPLCLSLARQAGAAKNATLPSGMQQLNIVPGALPDWLVSTEDLKNVTRDPLAEARRVLVVGQGGEADNQEIAMLAEKLGAEVGYSRARVMNGGVDAEKVIGISGHLLAPEVCIVVGASGAAALMAGVRNSKFVVAINHDASAAVFSQADVGVVDDWKVVLEALVTNIHADCQ.

225-253 (VCIVVGASGAAALMAGVRNSKFVVAINHD) provides a ligand contact to FAD.

Belongs to the ETF alpha-subunit/FixB family. YgcQ and YgcR form a heterodimer.

May play a role in a redox process. The polypeptide is Putative electron transfer flavoprotein subunit YgcQ (ygcQ) (Escherichia coli (strain K12)).